Reading from the N-terminus, the 445-residue chain is UDP-N-acetylmuramoylalanine--D-glutamate ligase (445 aa).

Glycine 117 to threonine 123 serves as a coordination point for ATP.

The protein belongs to the MurCDEF family.

Its subcellular location is the cytoplasm. It carries out the reaction UDP-N-acetyl-alpha-D-muramoyl-L-alanine + D-glutamate + ATP = UDP-N-acetyl-alpha-D-muramoyl-L-alanyl-D-glutamate + ADP + phosphate + H(+). The protein operates within cell wall biogenesis; peptidoglycan biosynthesis. Functionally, cell wall formation. Catalyzes the addition of glutamate to the nucleotide precursor UDP-N-acetylmuramoyl-L-alanine (UMA). The polypeptide is UDP-N-acetylmuramoylalanine--D-glutamate ligase (Neisseria meningitidis serogroup A / serotype 4A (strain DSM 15465 / Z2491)).